Reading from the N-terminus, the 209-residue chain is Ribosomal RNA large subunit methyltransferase E (209 aa).

The S-adenosyl-L-methionine site is built by Gly63, Trp65, Asp83, Asp99, and Asp124. The active-site Proton acceptor is the Lys164.

This sequence belongs to the class I-like SAM-binding methyltransferase superfamily. RNA methyltransferase RlmE family.

The protein resides in the cytoplasm. The catalysed reaction is uridine(2552) in 23S rRNA + S-adenosyl-L-methionine = 2'-O-methyluridine(2552) in 23S rRNA + S-adenosyl-L-homocysteine + H(+). Specifically methylates the uridine in position 2552 of 23S rRNA at the 2'-O position of the ribose in the fully assembled 50S ribosomal subunit. The protein is Ribosomal RNA large subunit methyltransferase E of Shewanella halifaxensis (strain HAW-EB4).